A 425-amino-acid chain; its full sequence is 3-phosphoshikimate 1-carboxyvinyltransferase (425 aa).

Positions 20, 21, and 25 each coordinate 3-phosphoshikimate. Lysine 20 lines the phosphoenolpyruvate pocket. 2 residues coordinate phosphoenolpyruvate: glycine 92 and arginine 120. Residues serine 165, glutamine 167, aspartate 312, and lysine 339 each contribute to the 3-phosphoshikimate site. Residue glutamine 167 coordinates phosphoenolpyruvate. Aspartate 312 acts as the Proton acceptor in catalysis. Phosphoenolpyruvate is bound by residues arginine 343 and arginine 385.

Belongs to the EPSP synthase family. As to quaternary structure, monomer.

The protein localises to the cytoplasm. The enzyme catalyses 3-phosphoshikimate + phosphoenolpyruvate = 5-O-(1-carboxyvinyl)-3-phosphoshikimate + phosphate. It functions in the pathway metabolic intermediate biosynthesis; chorismate biosynthesis; chorismate from D-erythrose 4-phosphate and phosphoenolpyruvate: step 6/7. Its function is as follows. Catalyzes the transfer of the enolpyruvyl moiety of phosphoenolpyruvate (PEP) to the 5-hydroxyl of shikimate-3-phosphate (S3P) to produce enolpyruvyl shikimate-3-phosphate and inorganic phosphate. The protein is 3-phosphoshikimate 1-carboxyvinyltransferase of Alkaliphilus metalliredigens (strain QYMF).